Consider the following 443-residue polypeptide: Glutamine synthetase (443 aa).

The 82-residue stretch at 16–97 folds into the GS beta-grasp domain; that stretch reads KRIKFVQLIF…VYGYIYKDGK (82 aa). A GS catalytic domain is found at 103–443; that stretch reads PRGVLRRTLE…EWELERYFFI (341 aa). Mg(2+) is bound by residues E126 and E128. Residue E176 participates in ATP binding. Residues E181 and E188 each coordinate Mg(2+). L-glutamate is bound at residue G233. H237 lines the Mg(2+) pocket. ATP contacts are provided by residues 239-241 and S241; that span reads HIS. L-glutamate-binding residues include R287, E293, and R305. The ATP site is built by R305 and R310. Mg(2+) is bound at residue E322. R324 lines the L-glutamate pocket.

It belongs to the glutamine synthetase family. In terms of assembly, oligomer of 12 subunits arranged in the form of two hexagons. It depends on Mg(2+) as a cofactor.

It is found in the cytoplasm. The enzyme catalyses L-glutamate + NH4(+) + ATP = L-glutamine + ADP + phosphate + H(+). Its function is as follows. Probably involved in nitrogen metabolism via ammonium assimilation. Catalyzes the ATP-dependent biosynthesis of glutamine from glutamate and ammonia. This is Glutamine synthetase from Pyrococcus horikoshii (strain ATCC 700860 / DSM 12428 / JCM 9974 / NBRC 100139 / OT-3).